Here is a 201-residue protein sequence, read N- to C-terminus: NADH-quinone oxidoreductase subunit C 1 (201 aa).

The protein belongs to the complex I 30 kDa subunit family. In terms of assembly, NDH-1 is composed of 14 different subunits. Subunits NuoB, C, D, E, F, and G constitute the peripheral sector of the complex.

The protein resides in the cell inner membrane. The enzyme catalyses a quinone + NADH + 5 H(+)(in) = a quinol + NAD(+) + 4 H(+)(out). Its function is as follows. NDH-1 shuttles electrons from NADH, via FMN and iron-sulfur (Fe-S) centers, to quinones in the respiratory chain. The immediate electron acceptor for the enzyme in this species is believed to be ubiquinone. Couples the redox reaction to proton translocation (for every two electrons transferred, four hydrogen ions are translocated across the cytoplasmic membrane), and thus conserves the redox energy in a proton gradient. The polypeptide is NADH-quinone oxidoreductase subunit C 1 (Rhizobium meliloti (strain 1021) (Ensifer meliloti)).